The primary structure comprises 635 residues: Arabinoxylan arabinofuranohydrolase (635 aa).

Residues 1-26 form the signal peptide; it reads MIRKCLVLFLSFALLLSVFPMLNVDA. Asp-49 serves as the catalytic Proton acceptor. Residue Glu-248 is the Proton donor of the active site. Position 311 (Asn-311) interacts with substrate. CBM6 domains lie at 379 to 508 and 517 to 634; these read TRVE…WQFT and TKVE…IEFS. Ca(2+) contacts are provided by Glu-382, Glu-384, Asn-406, Leu-407, Asp-503, Glu-520, Glu-522, Asp-539, Tyr-544, Asp-620, Trp-624, Asp-625, and Asp-629.

Belongs to the glycosyl hydrolase 43 family.

It is found in the secreted. It carries out the reaction Hydrolysis of terminal non-reducing alpha-L-arabinofuranoside residues in alpha-L-arabinosides.. The protein operates within glycan degradation; xylan degradation. Activated by calcium and magnesium. Inhibited by copper. Its function is as follows. Cleaves arabinose units from O-2- or O-3-monosubstituted xylose residues, thereby assisting in arabinoxylan (AX) and short-chain arabinoxylo-oligosaccharide (AXOS) degradation. Preferres wheat flour xylan over oat spelt xylan as substrate. Does not display endoxylanase activity. The polypeptide is Arabinoxylan arabinofuranohydrolase (xynD) (Paenibacillus polymyxa (Bacillus polymyxa)).